Consider the following 353-residue polypeptide: AA9 family lytic polysaccharide monooxygenase A (353 aa).

A signal peptide spans 1–19 (MKSTFGLLALAAAAKMAHA). The Cu(2+) site is built by His20 and His102. A disulfide bridge connects residues Cys62 and Cys183. His169 is a binding site for O2. Tyr180 contributes to the Cu(2+) binding site. Residues 266-276 (KPTTTTAAAPA) show a composition bias toward low complexity. Positions 266 to 316 (KPTTTTAAAPAETDSCDGDDDDYETETPAPQASATQAPAPQRPAPQTPSGS) are disordered. Positions 279–290 (DSCDGDDDDYET) are enriched in acidic residues. Over residues 291 to 304 (ETPAPQASATQAPA) the composition is skewed to low complexity. The CBM1 domain maps to 315 to 351 (GSVKEWYQCGGINYTGAKNCESGLVCKEWNPYYHQCI). The N-linked (GlcNAc...) asparagine glycan is linked to Asn327.

Belongs to the polysaccharide monooxygenase AA9 family. Cu(2+) is required as a cofactor.

Its subcellular location is the secreted. The catalysed reaction is [(1-&gt;4)-beta-D-glucosyl]n+m + reduced acceptor + O2 = 4-dehydro-beta-D-glucosyl-[(1-&gt;4)-beta-D-glucosyl]n-1 + [(1-&gt;4)-beta-D-glucosyl]m + acceptor + H2O.. Functionally, lytic polysaccharide monooxygenase (LPMO) that depolymerizes crystalline and amorphous polysaccharides via the oxidation of scissile alpha- or beta-(1-4)-glycosidic bonds, yielding C4 oxidation products. Catalysis by LPMOs requires the reduction of the active-site copper from Cu(II) to Cu(I) by a reducing agent and H(2)O(2) or O(2) as a cosubstrate. The protein is AA9 family lytic polysaccharide monooxygenase A (eglD) of Aspergillus clavatus (strain ATCC 1007 / CBS 513.65 / DSM 816 / NCTC 3887 / NRRL 1 / QM 1276 / 107).